A 210-amino-acid chain; its full sequence is Cytochrome c4 (210 aa).

The N-terminal stretch at 1 to 20 is a signal peptide; the sequence is MNKALVTLLLTLGITGLAHA. The heme c site is built by Cys-34, Cys-37, His-38, Met-86, Cys-139, Cys-142, His-143, and Met-187.

Binds 2 heme c groups covalently per subunit.

It is found in the periplasm. Its function is as follows. Diheme, high potential cytochrome c believed to be an intermediate electron donor to terminal oxidation systems. This chain is Cytochrome c4 (cycA), found in Azotobacter vinelandii.